Reading from the N-terminus, the 238-residue chain is Deoxyribose-phosphate aldolase (238 aa).

The active-site Proton donor/acceptor is the aspartate 104. Lysine 168 (schiff-base intermediate with acetaldehyde) is an active-site residue. The active-site Proton donor/acceptor is the lysine 197.

This sequence belongs to the DeoC/FbaB aldolase family. DeoC type 1 subfamily.

The protein localises to the cytoplasm. The enzyme catalyses 2-deoxy-D-ribose 5-phosphate = D-glyceraldehyde 3-phosphate + acetaldehyde. It participates in carbohydrate degradation; 2-deoxy-D-ribose 1-phosphate degradation; D-glyceraldehyde 3-phosphate and acetaldehyde from 2-deoxy-alpha-D-ribose 1-phosphate: step 2/2. Its function is as follows. Catalyzes a reversible aldol reaction between acetaldehyde and D-glyceraldehyde 3-phosphate to generate 2-deoxy-D-ribose 5-phosphate. This is Deoxyribose-phosphate aldolase from Bacteroides thetaiotaomicron (strain ATCC 29148 / DSM 2079 / JCM 5827 / CCUG 10774 / NCTC 10582 / VPI-5482 / E50).